We begin with the raw amino-acid sequence, 337 residues long: DNA-directed RNA polymerase subunit alpha (337 aa).

Positions 1 to 233 (MVREEVTIST…NLFIPFLHAE (233 aa)) are alpha N-terminal domain (alpha-NTD). Positions 266-337 (GIALKCIFID…FAMNLPKDFF (72 aa)) are alpha C-terminal domain (alpha-CTD).

The protein belongs to the RNA polymerase alpha chain family. In plastids the minimal PEP RNA polymerase catalytic core is composed of four subunits: alpha, beta, beta', and beta''. When a (nuclear-encoded) sigma factor is associated with the core the holoenzyme is formed, which can initiate transcription.

The protein localises to the plastid. It localises to the chloroplast. It carries out the reaction RNA(n) + a ribonucleoside 5'-triphosphate = RNA(n+1) + diphosphate. Its function is as follows. DNA-dependent RNA polymerase catalyzes the transcription of DNA into RNA using the four ribonucleoside triphosphates as substrates. The sequence is that of DNA-directed RNA polymerase subunit alpha from Ceratophyllum demersum (Rigid hornwort).